The primary structure comprises 170 residues: uncharacterized protein (170 aa).

Positions 8-167 constitute an N-acetyltransferase domain; it reads LLIREFEFKD…DEYYYAILEE (160 aa).

Belongs to the acetyltransferase family.

This is an uncharacterized protein from Bacillus subtilis (strain 168).